The primary structure comprises 1478 residues: Zinc finger protein 518A (1478 aa).

C2H2-type zinc fingers lie at residues 152-174 (FPCE…RKTH), 209-231 (FQCE…IHRH), 236-258 (YKCG…LRVH), and 264-287 (FTCH…ITLH). The segment at 355 to 394 (TQTKSEDQSQEQLNEEKGGRQHCEDGDKPIESGSEKATVL) is disordered. Lys358 participates in a covalent cross-link: Glycyl lysine isopeptide (Lys-Gly) (interchain with G-Cter in SUMO2). A compositionally biased stretch (basic and acidic residues) spans 368-388 (NEEKGGRQHCEDGDKPIESGS). Glycyl lysine isopeptide (Lys-Gly) (interchain with G-Cter in SUMO2) cross-links involve residues Lys390 and Lys428. Positions 464–484 (PSPALQPNTEKESTANLPPQA) are disordered. Lys518 is covalently cross-linked (Glycyl lysine isopeptide (Lys-Gly) (interchain with G-Cter in SUMO2)). A Phosphoserine modification is found at Ser652. The interval 656–694 (VCENLQRESSNKTVTQQSTSDSDTTSPLRKESSNSDSLL) is disordered. Over residues 670 to 681 (TQQSTSDSDTTS) the composition is skewed to low complexity. Residues Lys707, Lys792, Lys882, Lys895, Lys987, Lys1008, Lys1041, Lys1055, Lys1078, Lys1180, and Lys1441 each participate in a glycyl lysine isopeptide (Lys-Gly) (interchain with G-Cter in SUMO2) cross-link. The segment at 1444–1466 (FNCWFCGRVFDNQDVWAGHGQRH) adopts a C2H2-type 5 zinc-finger fold.

The protein belongs to the krueppel C2H2-type zinc-finger protein family.

The protein resides in the nucleus. Its function is as follows. Through its association with the EHMT1-EHMT2/G9A and PRC2/EED-EZH2 histone methyltransferase complexes may function in gene silencing, regulating repressive post-translational methylation of histone tails at promoters of target genes. This is Zinc finger protein 518A (Znf518a) from Rattus norvegicus (Rat).